A 974-amino-acid polypeptide reads, in one-letter code: GATOR2 complex protein WDR59 (974 aa).

WD repeat units lie at residues 57 to 98 (QSKW…GEVG), 103 to 143 (GHTR…KPTV), 146 to 185 (SAVA…TAVE), 189 to 229 (AHLS…KYLN), 232 to 276 (PCQV…TPVH), 278 to 318 (FVGH…RVDS), and 319 to 362 (QMQR…TASH). Residues 350–374 (HTEDTDHQHTASHGEEEALKEDPPR) form a disordered region. Positions 393-494 (QEFSLINVQI…RQLVSCLESF (102 aa)) constitute an RWD domain. Position 564 is a phosphoserine (Ser564). One copy of the WD 8 repeat lies at 668–706 (LNVNDIQETCQKNAASALLVGRKDLVQVWSLATVATDLC). Phosphoserine is present on residues Ser821, Ser822, and Ser830. The tract at residues 831–852 (LTYSDPRERERDQHDKNKRLLD) is disordered. Residues 835–851 (DPRERERDQHDKNKRLL) show a composition bias toward basic and acidic residues. The C4-type zinc-finger motif lies at 901 to 920 (YCSHCRSEVRGTQCAICKGF). Cys902, Cys905, Cys914, Cys917, Cys927, Cys938, His943, His946, His949, Cys960, Cys964, Cys966, and Cys968 together coordinate Zn(2+). An RING-type; atypical zinc finger spans residues 921-973 (TFQCAICHVAVRGSSNFCLTCGHGGHTSHMMEWFRTQEVCPTGCGCHCLLEST).

The protein belongs to the WD repeat WDR59 family. In terms of assembly, component of the GATOR2 subcomplex, composed of MIOS, SEC13, SEH1L, WDR24 and WDR59. The GATOR2 complex interacts with CASTOR1 and CASTOR2; the interaction is negatively regulated by arginine. The GATOR2 complex interacts with SESN1, SESN2 and SESN3; the interaction is negatively regulated by amino acids. Interacts with DDB1-CUL4A/B E3 ligase complexes.

It is found in the lysosome membrane. Its activity is regulated as follows. The GATOR2 complex is negatively regulated by the upstream amino acid sensors CASTOR1 and SESN2, which sequester the GATOR2 complex in absence of amino acids. In the presence of abundant amino acids, GATOR2 is released from CASTOR1 and SESN2 and activated. In terms of biological role, as a component of the GATOR2 complex, functions as an activator of the amino acid-sensing branch of the mTORC1 signaling pathway. The GATOR2 complex indirectly activates mTORC1 through the inhibition of the GATOR1 subcomplex. GATOR2 probably acts as an E3 ubiquitin-protein ligase toward GATOR1. In the presence of abundant amino acids, the GATOR2 complex mediates ubiquitination of the NPRL2 core component of the GATOR1 complex, leading to GATOR1 inactivation. In the absence of amino acids, GATOR2 is inhibited, activating the GATOR1 complex. This chain is GATOR2 complex protein WDR59, found in Homo sapiens (Human).